Consider the following 230-residue polypeptide: Demethylmenaquinone methyltransferase (230 aa).

Residues T57, D77, and 101 to 102 each bind S-adenosyl-L-methionine; that span reads DI.

Belongs to the class I-like SAM-binding methyltransferase superfamily. MenG/UbiE family.

It carries out the reaction a 2-demethylmenaquinol + S-adenosyl-L-methionine = a menaquinol + S-adenosyl-L-homocysteine + H(+). It participates in quinol/quinone metabolism; menaquinone biosynthesis; menaquinol from 1,4-dihydroxy-2-naphthoate: step 2/2. Methyltransferase required for the conversion of demethylmenaquinol (DMKH2) to menaquinol (MKH2). The chain is Demethylmenaquinone methyltransferase from Chlamydia pneumoniae (Chlamydophila pneumoniae).